We begin with the raw amino-acid sequence, 92 residues long: mRNA interferase toxin YafQ (92 aa).

The active-site Proton donor is the histidine 87.

It belongs to the RelE toxin family. YafQ subfamily. Monomer in the absence of antitoxin. Forms a heterotetramer with antitoxin DinJ, with 2 YafQ-DinJ dimers associated via the N-terminus of the DinJ antitoxins (YafQ-(DinJ)2-YafQ). In this complex the toxin activity is inhibited. Binds the 70S ribosome via the 50S ribosomal subunit.

In terms of biological role, toxic component of a type II toxin-antitoxin (TA) system. A sequence-specific mRNA endoribonuclease that inhibits translation elongation and induces bacterial stasis. Cleavage occurs between the second and third residue of the Lys codon followed by a G or A (5'AAA(G/A)3'), is reading-frame dependent and occurs within the 5' end of most mRNAs. Ribosome-binding confers the sequence specificity and reading frame-dependence. When overexpressed in liquid media YafQ partially inhibits protein synthesis, with a reduction in growth rate and colony growth rate. This effect is counteracted by coexpression with cognate antitoxin DinJ. YafQ and DinJ together bind their own promoter, and repress its expression. Cell death governed by the MazE-MazF and DinJ-YafQ TA systems seems to play a role in biofilm formation. This Escherichia coli (strain K12) protein is mRNA interferase toxin YafQ (yafQ).